A 56-amino-acid chain; its full sequence is MAVPKRRTSRSNTRSRRAQWKAKAPALAKCSRGHTIRPHTMCPTCGRYNDRQVLDV.

The segment covering 1–20 has biased composition (basic residues); that stretch reads MAVPKRRTSRSNTRSRRAQW. The tract at residues 1-26 is disordered; it reads MAVPKRRTSRSNTRSRRAQWKAKAPA.

It belongs to the bacterial ribosomal protein bL32 family.

The protein is Large ribosomal subunit protein bL32 of Parafrankia sp. (strain EAN1pec).